We begin with the raw amino-acid sequence, 400 residues long: Phosphoglycerate kinase (400 aa).

Substrate-binding positions include 21–23 (DFN), arginine 36, 59–62 (HLGR), arginine 119, and arginine 160. Residues lysine 211, glutamate 329, and 356–359 (GGDS) each bind ATP.

The protein belongs to the phosphoglycerate kinase family. As to quaternary structure, monomer.

It is found in the cytoplasm. It catalyses the reaction (2R)-3-phosphoglycerate + ATP = (2R)-3-phospho-glyceroyl phosphate + ADP. Its pathway is carbohydrate degradation; glycolysis; pyruvate from D-glyceraldehyde 3-phosphate: step 2/5. This chain is Phosphoglycerate kinase, found in Levilactobacillus brevis (strain ATCC 367 / BCRC 12310 / CIP 105137 / JCM 1170 / LMG 11437 / NCIMB 947 / NCTC 947) (Lactobacillus brevis).